The chain runs to 272 residues: Exosome complex component Rrp42 (272 aa).

This sequence belongs to the RNase PH family. Rrp42 subfamily. As to quaternary structure, component of the archaeal exosome complex. Forms a hexameric ring-like arrangement composed of 3 Rrp41-Rrp42 heterodimers. The hexameric ring associates with a trimer of Rrp4 and/or Csl4 subunits.

It localises to the cytoplasm. Non-catalytic component of the exosome, which is a complex involved in RNA degradation. Contributes to the structuring of the Rrp41 active site. This Thermococcus kodakarensis (strain ATCC BAA-918 / JCM 12380 / KOD1) (Pyrococcus kodakaraensis (strain KOD1)) protein is Exosome complex component Rrp42.